The following is a 165-amino-acid chain: Transcription antitermination protein NusB (165 aa).

This sequence belongs to the NusB family.

Involved in transcription antitermination. Required for transcription of ribosomal RNA (rRNA) genes. Binds specifically to the boxA antiterminator sequence of the ribosomal RNA (rrn) operons. In Nitratidesulfovibrio vulgaris (strain DSM 19637 / Miyazaki F) (Desulfovibrio vulgaris), this protein is Transcription antitermination protein NusB.